Here is a 264-residue protein sequence, read N- to C-terminus: Putative HTH-type transcriptional regulator TrmBL2 (264 aa).

A DNA-binding region (H-T-H motif) is located at residues 33 to 54; it reads LTPAELASVSEVPAPRTYDVLR.

The protein belongs to the transcriptional regulator TrmB family.

Functionally, binds to the maltodextrin transport gene cluster (mdxE operon) promoter and to some other TGM (Thermococcales-Glycolytic-Motif) sequences, but not exclusively. The protein is Putative HTH-type transcriptional regulator TrmBL2 (trmBL2) of Pyrococcus furiosus (strain ATCC 43587 / DSM 3638 / JCM 8422 / Vc1).